Consider the following 249-residue polypeptide: Small ribosomal subunit protein eS6 (249 aa).

2 disordered regions span residues 161–181 (PLAK…RLVT) and 194–249 (LKKQ…SSQK). Positions 216 to 229 (RSKEAKEKRQEQIA) are enriched in basic and acidic residues. Ser-235, Ser-236, Ser-240, Ser-244, and Ser-247 each carry phosphoserine. Residues 236–249 (SLRASTSKSESSQK) are compositionally biased toward low complexity.

This sequence belongs to the eukaryotic ribosomal protein eS6 family. In terms of assembly, component of the small ribosomal subunit. Part of the small subunit (SSU) processome, composed of more than 70 proteins and the RNA chaperone small nucleolar RNA (snoRNA) U3. Post-translationally, ribosomal protein S6 is the major substrate of protein kinases in eukaryote ribosomes. The phosphorylation is stimulated by growth factors, tumor promoting agents, and mitogens. It is dephosphorylated at growth arrest.

The protein localises to the cytoplasm. It is found in the nucleus. Its subcellular location is the nucleolus. Component of the 40S small ribosomal subunit. Plays an important role in controlling cell growth and proliferation through the selective translation of particular classes of mRNA. Part of the small subunit (SSU) processome, first precursor of the small eukaryotic ribosomal subunit. During the assembly of the SSU processome in the nucleolus, many ribosome biogenesis factors, an RNA chaperone and ribosomal proteins associate with the nascent pre-rRNA and work in concert to generate RNA folding, modifications, rearrangements and cleavage as well as targeted degradation of pre-ribosomal RNA by the RNA exosome. This is Small ribosomal subunit protein eS6 (rps6) from Xenopus laevis (African clawed frog).